Consider the following 443-residue polypeptide: Serine/threonine-protein phosphatase 2A 55 kDa regulatory subunit B beta isoform (443 aa).

WD repeat units lie at residues 22 to 61 (TEAD…KNQV), 87 to 128 (EIEE…KRPE), 171 to 209 (AHTY…QSFN), and 220 to 260 (ELTE…LCDR). Phosphoserine is present on serine 275. WD repeat units lie at residues 279 to 317 (EIIS…RPIE), 334 to 375 (ENDC…DVTL), and 410 to 442 (DFSK…QDKV). Tyrosine 295 carries the phosphotyrosine modification. Position 298 is a phosphothreonine (threonine 298).

It belongs to the phosphatase 2A regulatory subunit B family. In terms of assembly, PP2A consists of a common heterodimeric core enzyme, composed of a 36 kDa catalytic subunit (subunit C) and a 65 kDa constant regulatory subunit (PR65 or subunit A), that associates with a variety of regulatory subunits. Proteins that associate with the core dimer include three families of regulatory subunits B (the R2/B/PR55/B55, R3/B''/PR72/PR130/PR59 and R5/B'/B56 families), the 48 kDa variable regulatory subunit, viral proteins, and cell signaling molecules. Interacts with TOMM22. Interacts with IER5 (via N- and C-terminal regions).

It is found in the cytoplasm. The protein resides in the cytoskeleton. Its subcellular location is the membrane. Functionally, the B regulatory subunit might modulate substrate selectivity and catalytic activity, and might also direct the localization of the catalytic enzyme to a particular subcellular compartment. The protein is Serine/threonine-protein phosphatase 2A 55 kDa regulatory subunit B beta isoform (PPP2R2B) of Bos taurus (Bovine).